We begin with the raw amino-acid sequence, 94 residues long: DNA-directed RNA polymerase subunit Rpo11 (94 aa).

It belongs to the archaeal Rpo11/eukaryotic RPB11/RPC19 RNA polymerase subunit family. In terms of assembly, part of the RNA polymerase complex.

It is found in the cytoplasm. It catalyses the reaction RNA(n) + a ribonucleoside 5'-triphosphate = RNA(n+1) + diphosphate. DNA-dependent RNA polymerase (RNAP) catalyzes the transcription of DNA into RNA using the four ribonucleoside triphosphates as substrates. The sequence is that of DNA-directed RNA polymerase subunit Rpo11 from Haloarcula marismortui (strain ATCC 43049 / DSM 3752 / JCM 8966 / VKM B-1809) (Halobacterium marismortui).